The sequence spans 328 residues: Src kinase-associated phosphoprotein 2 (328 aa).

Residues 103–206 (EYLRAGYLEK…WVNIIMNSRG (104 aa)) form the PH domain. Residues 231 to 262 (IYEELPEESEKPVTEIETPKATPVPVNNTSGK) are disordered. Positions 238–248 (ESEKPVTEIET) are enriched in basic and acidic residues. The SH3 domain occupies 266–327 (DYANFYRGLW…PKAYIMEMYD (62 aa)).

This sequence belongs to the SKAP family. Post-translationally, phosphorylated on tyrosines.

It localises to the cytoplasm. May be involved in B-cell and macrophage adhesion processes. May play a role in src signaling pathway. This Xenopus tropicalis (Western clawed frog) protein is Src kinase-associated phosphoprotein 2 (skap2).